The following is a 404-amino-acid chain: Tripartite motif-containing 13 (404 aa).

Residues 10 to 56 form an RING-type zinc finger; the sequence is CPICCCLFEDPRVLPCSHSFCKKCLEGILDGNRSPTWRPPFKCPTCR. The B box-type zinc finger occupies 87 to 129; the sequence is PRMSQCRVHSGQPLNIFCATDLKLICGFCATTGDHKGHKFCAL. Positions 92, 95, 115, and 121 each coordinate Zn(2+). The helical transmembrane segment at 102–119 threads the bilayer; it reads IFCATDLKLICGFCATTG. Positions 186–236 form a coiled coil; it reads KLLRTLEHKRSEILSDLETLKLAVMQTFDPEINRLRSALEEQRRALNIAES.

The protein resides in the endoplasmic reticulum membrane. Its pathway is protein modification; protein ubiquitination. In terms of biological role, E3 ubiquitin ligase involved in the retrotranslocation and turnover of membrane and secretory proteins from the ER through a set of processes named ER-associated degradation (ERAD). This process acts on misfolded proteins as well as in the regulated degradation of correctly folded proteins. This Danio rerio (Zebrafish) protein is Tripartite motif-containing 13 (trim13).